The primary structure comprises 203 residues: Auxin-induced protein 22E (203 aa).

The EAR-like (transcriptional repression) motif lies at 15–19 (LRLGL). Residues 15 to 77 (LRLGLPGSDE…DHNEDSVQPA (63 aa)) form a disordered region. A compositionally biased stretch (basic and acidic residues) spans 43–52 (SSPELEESRC). Over residues 58–67 (SDSSDSTTTS) the composition is skewed to low complexity. The PB1 domain maps to 107-199 (GMYLKVSMAG…RIIKGSEAKG (93 aa)).

It belongs to the Aux/IAA family. Homodimers and heterodimers.

Its subcellular location is the nucleus. Functionally, aux/IAA proteins are short-lived transcriptional factors that function as repressors of early auxin response genes at low auxin concentrations. Repression is thought to result from the interaction with auxin response factors (ARFs), proteins that bind to the auxin-responsive promoter element (AuxRE). Formation of heterodimers with ARF proteins may alter their ability to modulate early auxin response genes expression. The polypeptide is Auxin-induced protein 22E (AUX22E) (Vigna radiata var. radiata (Mung bean)).